We begin with the raw amino-acid sequence, 875 residues long: Phosphatidylinositol 3-kinase VPS34 (875 aa).

Residues 14 to 188 (LDVPLKVKIK…WLDEITISKL (175 aa)) form the C2 PI3K-type domain. One can recognise a PIK helical domain in the interval 293–526 (LDKQVKPDIK…SSFWSRLDKK (234 aa)). Residues 593-859 (CPETSKVFKS…LINDSVNALL (267 aa)) enclose the PI3K/PI4K catalytic domain. A G-loop region spans residues 599–605 (VFKSSLS). The tract at residues 728–736 (GVGDRHLDN) is catalytic loop. The tract at residues 747–768 (HADFGYILGQDPKPFPPLMKLP) is activation loop.

The protein belongs to the PI3/PI4-kinase family. In terms of assembly, component of the autophagy-specific VPS34 PI3-kinase complex I composed of VPS15, VPS30, VPS34, ATG14 and ATG38, and of the VPS34 PI3-kinase complex II composed of VPS15, VPS30, VPS34 and VPS38. Interacts directly with ATG38. Interacts directly with VPS34. In terms of processing, autophosphorylated. Might also be phosphorylated by VPS15.

It localises to the golgi apparatus. It is found in the trans-Golgi network membrane. The protein localises to the endosome membrane. The enzyme catalyses a 1,2-diacyl-sn-glycero-3-phospho-(1D-myo-inositol) + ATP = a 1,2-diacyl-sn-glycero-3-phospho-(1D-myo-inositol-3-phosphate) + ADP + H(+). With respect to regulation, phosphatidylinositol 3-kinase activity is directly dependent on VPS15 protein kinase activity. Phosphatidylinositol 3-kinase required for cytoplasm to vacuole transport (Cvt) and autophagy as a part of the autophagy-specific VPS34 PI3-kinase complex I. This complex is essential to recruit the ATG8-phosphatidylinositol conjugate and the ATG12-ATG5 conjugate to the pre-autophagosomal structure. Also involved in endosome-to-Golgi retrograde transport as part of the VPS34 PI3-kinase complex II. This second complex is required for the endosome-to-Golgi retrieval of PEP1 and KEX2, and the recruitment of VPS5 and VPS7, two components of the retromer complex, to endosomal membranes (probably through the synthesis of a specific pool of phosphatidylinositol 3-phosphate recruiting the retromer to the endosomes). Its activation by VPS15 may lead to the phosphorylation of phosphatidylinositol in the sorting compartment membrane. Finally, it might also be involved in ethanol tolerance and cell wall integrity. The polypeptide is Phosphatidylinositol 3-kinase VPS34 (VPS34) (Saccharomyces cerevisiae (strain ATCC 204508 / S288c) (Baker's yeast)).